The chain runs to 932 residues: Probable UDP-N-acetylglucosamine--peptide N-acetylglucosaminyltransferase SPINDLY (932 aa).

A compositionally biased stretch (basic and acidic residues) spans 1–15 (MAWTEKDVENGKESD). Residues 1–39 (MAWTEKDVENGKESDSLGNNGFLKGVQSSSDSKGSPVRI) are disordered. TPR repeat units follow at residues 48–81 (GKDA…DSGS), 82–115 (IESL…DPQN), 116–149 (ACAL…DPSY), 157–190 (AIVL…DSHY), 191–224 (APAY…RPMY), 225–258 (AEAY…SPNF), 266–299 (AIAL…NWHY), 300–333 (ADAM…NPHC), 334–367 (AEAC…KPNF), 369–401 (QSLN…NPTY), and 402–435 (AEAY…DPDS). Positions 436 to 932 (RNAGQNRLLA…NQAGNPGKQS (497 aa)) are catalytic region. A disordered region spans residues 881–902 (VSPIEKTRISASKDGPIKENGF).

This sequence belongs to the glycosyltransferase 41 family. O-GlcNAc transferase subfamily. In terms of tissue distribution, expressed in stems, leaves and flowers. Expressed during all stages of corolla maturation.

The protein resides in the nucleus. The enzyme catalyses L-seryl-[protein] + UDP-N-acetyl-alpha-D-glucosamine = 3-O-(N-acetyl-beta-D-glucosaminyl)-L-seryl-[protein] + UDP + H(+). The catalysed reaction is L-threonyl-[protein] + UDP-N-acetyl-alpha-D-glucosamine = 3-O-(N-acetyl-beta-D-glucosaminyl)-L-threonyl-[protein] + UDP + H(+). The protein operates within protein modification; protein glycosylation. In terms of biological role, probable O-linked N-acetylglucosamine transferase (OGT) involved in various processes such as gibberellin (GA) signaling pathway. OGTs catalyze the addition of nucleotide-activated sugars directly onto the polypeptide through O-glycosidic linkage with the hydroxyl of serine or threonine. Probably acts by adding O-linked sugars to yet unknown proteins. This is Probable UDP-N-acetylglucosamine--peptide N-acetylglucosaminyltransferase SPINDLY (SPY) from Petunia hybrida (Petunia).